The following is a 118-amino-acid chain: Large ribosomal subunit protein bL19 (118 aa).

Belongs to the bacterial ribosomal protein bL19 family.

Functionally, this protein is located at the 30S-50S ribosomal subunit interface and may play a role in the structure and function of the aminoacyl-tRNA binding site. The sequence is that of Large ribosomal subunit protein bL19 from Helicobacter pylori (strain G27).